The sequence spans 155 residues: uncharacterized protein (155 aa).

This is an uncharacterized protein from Acanthamoeba polyphaga (Amoeba).